We begin with the raw amino-acid sequence, 116 residues long: Beta-2-microglobulin (116 aa).

Residues 1–19 (MRAIITFALFCVLYVTVQG) form the signal peptide. The Ig-like C1-type domain maps to 24–110 (PKVQVYSHFP…VRHMNNKNIY (87 aa)). The cysteines at positions 44 and 99 are disulfide-linked.

It belongs to the beta-2-microglobulin family. As to quaternary structure, heterodimer of an alpha chain and a beta chain. Beta-2-microglobulin is the beta-chain of major histocompatibility complex class I molecules.

Its subcellular location is the secreted. Functionally, component of the class I major histocompatibility complex (MHC). Involved in the presentation of peptide antigens to the immune system. This is Beta-2-microglobulin (b2m) from Cyprinus carpio (Common carp).